The following is a 672-amino-acid chain: uncharacterized protein (672 aa).

The span at 1 to 10 (MAKSDGDDPL) shows a compositional bias: basic and acidic residues. A disordered region spans residues 1-40 (MAKSDGDDPLRPASPRLRSSRRHSLRYSAYTGGPDPLAPP).

This is an uncharacterized protein from Mycobacterium tuberculosis (strain CDC 1551 / Oshkosh).